We begin with the raw amino-acid sequence, 336 residues long: UDP-N-acetylenolpyruvoylglucosamine reductase (336 aa).

In terms of domain architecture, FAD-binding PCMH-type spans 17-188; it reads GFDVRARYAS…TAVTLRLSRD (172 aa). Arginine 164 is an active-site residue. Serine 236 functions as the Proton donor in the catalytic mechanism. Glutamate 332 is an active-site residue.

It belongs to the MurB family. FAD serves as cofactor.

The protein resides in the cytoplasm. The enzyme catalyses UDP-N-acetyl-alpha-D-muramate + NADP(+) = UDP-N-acetyl-3-O-(1-carboxyvinyl)-alpha-D-glucosamine + NADPH + H(+). Its pathway is cell wall biogenesis; peptidoglycan biosynthesis. Cell wall formation. This chain is UDP-N-acetylenolpyruvoylglucosamine reductase, found in Cupriavidus pinatubonensis (strain JMP 134 / LMG 1197) (Cupriavidus necator (strain JMP 134)).